The following is a 238-amino-acid chain: Beta-glucanase (238 aa).

An N-terminal signal peptide occupies residues 1-26; the sequence is MMKKKSWFTLMITGVISLFFSVSAFA. Positions 29–238 constitute a GH16 domain; it reads VFWEPLSYFN…EYDWVKYTSN (210 aa). A disulfide bridge links Cys56 with Cys85. Glu129 functions as the Nucleophile in the catalytic mechanism. Residue Glu133 is the Proton donor of the active site.

This sequence belongs to the glycosyl hydrolase 16 family.

It carries out the reaction Hydrolysis of (1-&gt;4)-beta-D-glucosidic linkages in beta-D-glucans containing (1-&gt;3)- and (1-&gt;4)-bonds.. The sequence is that of Beta-glucanase (gluB) from Paenibacillus polymyxa (Bacillus polymyxa).